Reading from the N-terminus, the 822-residue chain is SKI/DACH domain-containing protein 1 (822 aa).

The span at 245–261 (HHHHHHHHHHHHHHHRA) shows a compositional bias: basic residues. Residues 245 to 370 (HHHHHHHHHH…SSSGSSQVSV (126 aa)) are disordered. The span at 278–318 (PHLGSFPESCSSDSESSSYSDHAANDSDFGSSLSSSSNSVS) shows a compositional bias: low complexity. Positions 319 to 338 (SEEEEEEGEEEEEEEEEEEG) are enriched in acidic residues. A Glycyl lysine isopeptide (Lys-Gly) (interchain with G-Cter in SUMO2) cross-link involves residue lysine 602. Disordered stretches follow at residues 658-677 (ETPS…TLGS) and 706-732 (LQTP…THEG). Over residues 660 to 675 (PSLNPLAQSQGLSCTL) the composition is skewed to polar residues.

It belongs to the DACH/dachshund family.

The polypeptide is SKI/DACH domain-containing protein 1 (Skida1) (Mus musculus (Mouse)).